The following is an 808-amino-acid chain: Probable E3 ubiquitin-protein ligase MARCHF10 (808 aa).

3 disordered regions span residues Leu-33 to Pro-81, Gln-101 to Ser-268, and Ser-284 to Val-415. A compositionally biased stretch (basic and acidic residues) spans Arg-34–Gln-49. The span at Gln-237–Ser-249 shows a compositional bias: polar residues. Composition is skewed to basic and acidic residues over residues Lys-330 to Pro-349 and Leu-379 to Lys-397. The segment at Asp-651–Asp-721 adopts an RING-CH-type zinc-finger fold. The Zn(2+) site is built by Cys-659, Cys-662, Cys-677, Cys-679, His-687, Cys-690, Cys-711, and Cys-714. Residues Glu-773 to Val-808 are disordered.

The enzyme catalyses S-ubiquitinyl-[E2 ubiquitin-conjugating enzyme]-L-cysteine + [acceptor protein]-L-lysine = [E2 ubiquitin-conjugating enzyme]-L-cysteine + N(6)-ubiquitinyl-[acceptor protein]-L-lysine.. It functions in the pathway protein modification; protein ubiquitination. Its function is as follows. E3 ubiquitin-protein ligase. E3 ubiquitin ligases accept ubiquitin from an E2 ubiquitin-conjugating enzyme in the form of a thioester and then directly transfer the ubiquitin to targeted substrates. The sequence is that of Probable E3 ubiquitin-protein ligase MARCHF10 from Homo sapiens (Human).